A 127-amino-acid polypeptide reads, in one-letter code: Large ribosomal subunit protein bL12 (127 aa).

This sequence belongs to the bacterial ribosomal protein bL12 family. Homodimer. Part of the ribosomal stalk of the 50S ribosomal subunit. Forms a multimeric L10(L12)X complex, where L10 forms an elongated spine to which 2 to 4 L12 dimers bind in a sequential fashion. Binds GTP-bound translation factors.

Forms part of the ribosomal stalk which helps the ribosome interact with GTP-bound translation factors. Is thus essential for accurate translation. This Sinorhizobium fredii (strain NBRC 101917 / NGR234) protein is Large ribosomal subunit protein bL12.